Consider the following 347-residue polypeptide: 4-hydroxy-2-oxovalerate aldolase 4 (347 aa).

A Pyruvate carboxyltransferase domain is found at 9-259 (ITIVDTTLRD…DTGVDLFPLI (251 aa)). Substrate is bound by residues 17–18 (RD), Ser-171, and His-198. Asp-18 serves as a coordination point for Mn(2+). Mn(2+) is bound by residues His-198 and His-200. Substrate is bound at residue Tyr-289.

The protein belongs to the 4-hydroxy-2-oxovalerate aldolase family.

The catalysed reaction is (S)-4-hydroxy-2-oxopentanoate = acetaldehyde + pyruvate. This is 4-hydroxy-2-oxovalerate aldolase 4 from Rhodococcus opacus (strain B4).